A 319-amino-acid chain; its full sequence is Urease accessory protein UreD (319 aa).

The interval 284–319 (RLSTPQPPREWPLQEEGTFSNERFTKDHQSPSASPH) is disordered.

The protein belongs to the UreD family. In terms of assembly, ureD, UreF and UreG form a complex that acts as a GTP-hydrolysis-dependent molecular chaperone, activating the urease apoprotein by helping to assemble the nickel containing metallocenter of UreC. The UreE protein probably delivers the nickel.

Its subcellular location is the cytoplasm. Its function is as follows. Required for maturation of urease via the functional incorporation of the urease nickel metallocenter. The polypeptide is Urease accessory protein UreD (Prochlorococcus marinus (strain MIT 9313)).